The chain runs to 38 residues: Potassium channel toxin alpha-KTx 6.4 (38 aa).

4 disulfides stabilise this stretch: Cys-6–Cys-27, Cys-12–Cys-32, Cys-16–Cys-34, and Cys-22–Cys-37.

It belongs to the short scorpion toxin superfamily. Potassium channel inhibitor family. Alpha-KTx 06 subfamily. As to expression, expressed by the venom gland.

It is found in the secreted. Potently, completely and reversibly blocks voltage-gated potassium channel Kv1.2/KCNA2 and Shaker B (Sh). Also blocks small conductance (SK) calcium-activated potassium channel (KCNN). This chain is Potassium channel toxin alpha-KTx 6.4, found in Pandinus imperator (Emperor scorpion).